Here is a 659-residue protein sequence, read N- to C-terminus: Protein SCARECROW 1 (659 aa).

Disordered regions lie at residues 1-33 and 188-285; these read MGSS…ITSL and SDPA…KQRD. The span at 190–228 shows a compositional bias: pro residues; the sequence is PAPPPPPPPSHPALLPPDATAPPPPPTSVAALPPPPPPQ. The span at 258 to 271 shows a compositional bias: low complexity; that stretch reads AAAAAAAAAAALAA. The stretch at 258-289 forms a coiled coil; it reads AAAAAAAAAAALAAAKERKEEQRRKQRDEEGL. The segment covering 272–285 has biased composition (basic and acidic residues); it reads AKERKEEQRRKQRD. Residues 282–652 form the GRAS domain; that stretch reads KQRDEEGLHL…LCLLTASAWR (371 aa). Residues 289–353 are leucine repeat I (LRI); it reads LHLLTLLLQC…VSSCLGLYAP (65 aa). A LxCxE motif motif is present at residues 296–300; the sequence is LQCAE. Positions 372-437 are VHIID; sequence FQVFNGISPF…GGPPRVRLTG (66 aa). The VHIID signature appears at 403 to 407; sequence VHIID. The leucine repeat II (LRII) stretch occupies residues 447–479; that stretch reads ATGKRLSDFADTLGLPFEFCPVADKAGNLDPEK. The PFYRE stretch occupies residues 488–575; sequence VAVHWLRHSL…QQLLSREIRN (88 aa). Residues 578-652 form an SAW region; sequence AVGGPARTGD…LCLLTASAWR (75 aa).

This sequence belongs to the GRAS family. Interacts with SHR1, but not with SHR2.

Its subcellular location is the nucleus. Functionally, transcription factor required for quiescent center cells specification and maintenance of surrounding stem cells, and for the asymmetric cell division involved in radial pattern formation in roots. Essential for cell division but not differentiation of the ground tissue. Regulates the radial organization of the shoot axial organs. Restricts SHR movment and sequesters it into the nucleus of the endodermis. This Oryza sativa subsp. indica (Rice) protein is Protein SCARECROW 1 (SCR1).